The chain runs to 243 residues: UPF0246 protein Sez_1855 (243 aa).

This sequence belongs to the UPF0246 family.

In Streptococcus equi subsp. zooepidemicus (strain MGCS10565), this protein is UPF0246 protein Sez_1855.